We begin with the raw amino-acid sequence, 1001 residues long: Serine/threonine-protein kinase TAO1 (1001 aa).

The residue at position 9 (Ser-9) is a Phosphoserine. Residues 28–281 (FTDLREIGHG…SEELLKHIFV (254 aa)) form the Protein kinase domain. Residues 34-42 (IGHGSFGAV) and Lys-57 contribute to the ATP site. Catalysis depends on Asp-151, which acts as the Proton acceptor. The tract at residues 324–433 (PAVEAQEEEE…QVSRHKSHYR (110 aa)) is disordered. Over residues 350–373 (SNQSIPSMSISASSQSSSVNSLPD) the composition is skewed to low complexity. Basic and acidic residues-rich tracts occupy residues 375–388 (SDDKSELDMMEGDH) and 399–416 (LKPEEENYREEGDPRTRA). A phosphoserine mark is found at Ser-421 and Ser-445. A coiled-coil region spans residues 458–651 (SELREQMSGY…QTQKDLEHAM (194 aa)). A disordered region spans residues 567 to 587 (KEELNENQSTPKKEKQEWLSK). The segment covering 577 to 587 (PKKEKQEWLSK) has biased composition (basic and acidic residues). Residue Thr-669 is modified to Phosphothreonine. Residues 754–877 (KAVLKRLKEE…LERQAREIEA (124 aa)) are a coiled coil. Positions 911–1001 (SHNPTGGPGP…ISNGSHMSYT (91 aa)) are disordered. Ser-965 is subject to Phosphoserine. A compositionally biased stretch (polar residues) spans 975-1001 (GGRTEQGMSRSTSVTSQISNGSHMSYT).

The protein belongs to the protein kinase superfamily. STE Ser/Thr protein kinase family. STE20 subfamily. In terms of assembly, self-associates. Interacts with MAP2K3. Interacts with SPRED1. Interacts with TESK1; the interaction inhibits TAOK1 kinase activity. Interacts with MAP3K7. Post-translationally, proteolytically processed by caspase-3 (CASP3). In terms of processing, autophosphorylated. Phosphorylated by ATM in response to DNA damage. Phosphorylated by LRRK2. In terms of tissue distribution, highly expressed in the testis, and to a lower extent also expressed in brain, placenta, colon and skeletal muscle.

It is found in the cytoplasm. The enzyme catalyses L-seryl-[protein] + ATP = O-phospho-L-seryl-[protein] + ADP + H(+). It carries out the reaction L-threonyl-[protein] + ATP = O-phospho-L-threonyl-[protein] + ADP + H(+). With respect to regulation, serine/threonine-protein kinase activity is inhibited by SPRED1. In terms of biological role, serine/threonine-protein kinase involved in various processes such as p38/MAPK14 stress-activated MAPK cascade, DNA damage response and regulation of cytoskeleton stability. Phosphorylates MAP2K3, MAP2K6 and MARK2. Acts as an activator of the p38/MAPK14 stress-activated MAPK cascade by mediating phosphorylation and subsequent activation of the upstream MAP2K3 and MAP2K6 kinases. Involved in G-protein coupled receptor signaling to p38/MAPK14. In response to DNA damage, involved in the G2/M transition DNA damage checkpoint by activating the p38/MAPK14 stress-activated MAPK cascade, probably by mediating phosphorylation of MAP2K3 and MAP2K6. Acts as a regulator of cytoskeleton stability by phosphorylating 'Thr-208' of MARK2, leading to activate MARK2 kinase activity and subsequent phosphorylation and detachment of MAPT/TAU from microtubules. Also acts as a regulator of apoptosis: regulates apoptotic morphological changes, including cell contraction, membrane blebbing and apoptotic bodies formation via activation of the MAPK8/JNK cascade. Plays an essential role in the regulation of neuronal development in the central nervous system. Also plays a role in the regulation of neuronal migration to the cortical plate. The polypeptide is Serine/threonine-protein kinase TAO1 (TAOK1) (Homo sapiens (Human)).